The primary structure comprises 382 residues: Lipid-A-disaccharide synthase (382 aa).

The protein belongs to the LpxB family.

The enzyme catalyses 2-N,3-O-bis[(3R)-3-hydroxytetradecanoyl]-alpha-D-glucosaminyl 1-phosphate + UDP-2-N,3-O-bis[(3R)-3-hydroxytetradecanoyl]-alpha-D-glucosamine = lipid A disaccharide (E. coli) + UDP + H(+). It catalyses the reaction a lipid X + a UDP-2-N,3-O-bis[(3R)-3-hydroxyacyl]-alpha-D-glucosamine = a lipid A disaccharide + UDP + H(+). It functions in the pathway glycolipid biosynthesis; lipid IV(A) biosynthesis; lipid IV(A) from (3R)-3-hydroxytetradecanoyl-[acyl-carrier-protein] and UDP-N-acetyl-alpha-D-glucosamine: step 5/6. Its function is as follows. Condensation of UDP-2,3-diacylglucosamine and 2,3-diacylglucosamine-1-phosphate to form lipid A disaccharide, a precursor of lipid A, a phosphorylated glycolipid that anchors the lipopolysaccharide to the outer membrane of the cell. The chain is Lipid-A-disaccharide synthase from Salmonella arizonae (strain ATCC BAA-731 / CDC346-86 / RSK2980).